We begin with the raw amino-acid sequence, 345 residues long: Dihydroorotate dehydrogenase (quinone) (345 aa).

FMN-binding positions include 65–69 and threonine 89; that span reads AGLDK. Lysine 69 is a substrate binding site. 114 to 118 contacts substrate; it reads NRMGF. FMN is bound by residues asparagine 142 and asparagine 175. Asparagine 175 is a binding site for substrate. The active-site Nucleophile is serine 178. Residue asparagine 180 coordinates substrate. FMN is bound by residues lysine 220 and threonine 248. 249–250 is a binding site for substrate; the sequence is NT. Residues glycine 271, glycine 300, and 321 to 322 each bind FMN; that span reads YT.

It belongs to the dihydroorotate dehydrogenase family. Type 2 subfamily. Monomer. FMN serves as cofactor.

Its subcellular location is the cell membrane. The catalysed reaction is (S)-dihydroorotate + a quinone = orotate + a quinol. The protein operates within pyrimidine metabolism; UMP biosynthesis via de novo pathway; orotate from (S)-dihydroorotate (quinone route): step 1/1. Catalyzes the conversion of dihydroorotate to orotate with quinone as electron acceptor. The chain is Dihydroorotate dehydrogenase (quinone) from Burkholderia cenocepacia (strain ATCC BAA-245 / DSM 16553 / LMG 16656 / NCTC 13227 / J2315 / CF5610) (Burkholderia cepacia (strain J2315)).